The sequence spans 506 residues: Cytochrome P450 4B1 (506 aa).

Glu-310 lines the heme pocket. Ser-431 bears the Phosphoserine mark. Residue Cys-448 participates in heme binding.

Belongs to the cytochrome P450 family. Requires heme as cofactor.

Its subcellular location is the endoplasmic reticulum membrane. It is found in the microsome membrane. The catalysed reaction is an organic molecule + reduced [NADPH--hemoprotein reductase] + O2 = an alcohol + oxidized [NADPH--hemoprotein reductase] + H2O + H(+). Its function is as follows. Cytochromes P450 are a group of heme-thiolate monooxygenases. In liver microsomes, this enzyme is involved in an NADPH-dependent electron transport pathway. It oxidizes a variety of structurally unrelated compounds, including steroids, fatty acids, and xenobiotics. In Oryctolagus cuniculus (Rabbit), this protein is Cytochrome P450 4B1 (CYP4B1).